A 456-amino-acid polypeptide reads, in one-letter code: MEGQQHGEQLKRGLKNRHIQLIALGGAIGTGLFLGSASVIQSAGPGIILGYAIAGFIAFLIMRQLGEMVVEEPVAGSFSHFAYKYWGSFAGFASGWNYWVLYVLVAMAELTAVGKYIQFWYPEIPTWVSAAVFFVVINAINLTNVKVFGEMEFWFAIIKVIAVVAMIIFGAWLLFSGNGGPQASVSNLWDQGGFLPHGFTGLVMMMAIIMFSFGGLELVGITAAEADNPEQSIPKATNQVIYRILIFYIGSLAVLLSLMPWTRVTADTSPFVLIFHELGDTFVANALNIVVLTAALSVYNSCVYCNSRMLFGLAQQGNAPKALASVDKRGVPVNTILVSALVTALCVLINYLAPESAFGLLMALVVSALVINWAMISLAHMKFRRAKQEQGVVTRFPALLYPLGNWICLLFMAAVLVIMLMTPGMAISVYLIPVWLIVLGIGYLFKEKTAKAVKAH.

Residues 1–18 (MEGQQHGEQLKRGLKNRH) are Cytoplasmic-facing. A helical transmembrane segment spans residues 19–39 (IQLIALGGAIGTGLFLGSASV). At 40–41 (IQ) the chain is on the periplasmic side. Residues 42–62 (SAGPGIILGYAIAGFIAFLIM) traverse the membrane as a helical segment. Topologically, residues 63–85 (RQLGEMVVEEPVAGSFSHFAYKY) are cytoplasmic. Residues 86–106 (WGSFAGFASGWNYWVLYVLVA) traverse the membrane as a helical segment. Residues 107 to 116 (MAELTAVGKY) are Periplasmic-facing. The chain crosses the membrane as a helical span at residues 117–137 (IQFWYPEIPTWVSAAVFFVVI). The Cytoplasmic portion of the chain corresponds to 138-154 (NAINLTNVKVFGEMEFW). The helical transmembrane segment at 155–175 (FAIIKVIAVVAMIIFGAWLLF) threads the bilayer. Over 176-200 (SGNGGPQASVSNLWDQGGFLPHGFT) the chain is Periplasmic. A helical membrane pass occupies residues 201–221 (GLVMMMAIIMFSFGGLELVGI). Residues 222–239 (TAAEADNPEQSIPKATNQ) lie on the Cytoplasmic side of the membrane. Residues 240 to 260 (VIYRILIFYIGSLAVLLSLMP) form a helical membrane-spanning segment. Over 261–270 (WTRVTADTSP) the chain is Periplasmic. A helical membrane pass occupies residues 271–291 (FVLIFHELGDTFVANALNIVV). Over 292 to 332 (LTAALSVYNSCVYCNSRMLFGLAQQGNAPKALASVDKRGVP) the chain is Cytoplasmic. A helical transmembrane segment spans residues 333 to 353 (VNTILVSALVTALCVLINYLA). Topologically, residues 354–357 (PESA) are periplasmic. Residues 358–378 (FGLLMALVVSALVINWAMISL) form a helical membrane-spanning segment. Residues 379–398 (AHMKFRRAKQEQGVVTRFPA) are Cytoplasmic-facing. Residues 399 to 419 (LLYPLGNWICLLFMAAVLVIM) form a helical membrane-spanning segment. The Periplasmic portion of the chain corresponds to 420–424 (LMTPG). Residues 425-445 (MAISVYLIPVWLIVLGIGYLF) traverse the membrane as a helical segment. At 446–456 (KEKTAKAVKAH) the chain is on the cytoplasmic side.

The protein belongs to the amino acid-polyamine-organocation (APC) superfamily. Amino acid transporter (AAT) (TC 2.A.3.1) family.

It is found in the cell inner membrane. It catalyses the reaction L-phenylalanine(in) + H(+)(in) = L-phenylalanine(out) + H(+)(out). The catalysed reaction is L-tryptophan(in) + H(+)(in) = L-tryptophan(out) + H(+)(out). It carries out the reaction L-tyrosine(in) + H(+)(in) = L-tyrosine(out) + H(+)(out). Functionally, permease that is involved in the active transport across the cytoplasmic membrane of all three aromatic amino acids, phenylalanine, tyrosine and tryptophan. This chain is Aromatic amino acid transport protein AroP (aroP), found in Escherichia coli O6:H1 (strain CFT073 / ATCC 700928 / UPEC).